Reading from the N-terminus, the 387-residue chain is Na(+)/H(+) antiporter NhaA (387 aa).

The next 12 helical transmembrane spans lie at 16-36 (AGGV…NSSI), 53-73 (IEHY…GLEL), 89-109 (LLPI…HMFF), 118-138 (GSGI…SLLG), 147-167 (VFLT…IAIF), 171-191 (GIDV…FILN), 197-217 (ILWP…HSGV), 220-240 (TITG…PDSI), 251-271 (PVAF…IIDS), 283-303 (IGIF…FCAI), 321-341 (VIGV…ITLL), and 354-374 (IAIM…LKMT).

It belongs to the NhaA Na(+)/H(+) (TC 2.A.33) antiporter family.

Its subcellular location is the cell inner membrane. It catalyses the reaction Na(+)(in) + 2 H(+)(out) = Na(+)(out) + 2 H(+)(in). Na(+)/H(+) antiporter that extrudes sodium in exchange for external protons. The protein is Na(+)/H(+) antiporter NhaA of Cytophaga hutchinsonii (strain ATCC 33406 / DSM 1761 / CIP 103989 / NBRC 15051 / NCIMB 9469 / D465).